Reading from the N-terminus, the 481-residue chain is 4-hydroxyphenylacetate 3-monooxygenase oxygenase component (481 aa).

Substrate contacts are provided by residues 100–104 and histidine 142; that span reads RSPDY. Residues 142–144, 148–151, and threonine 185 each bind FAD; these read HAL and QVNR. 197–198 serves as a coordination point for substrate; sequence ST. Residue 444-447 coordinates FAD; sequence DPVR.

The protein belongs to the FADH(2)-utilizing monooxygenase family. Homotetramer consisting of a dimer of dimers. 4-HPA 3-monooxygenase consists of a reductase component HpaC and an oxygenase component HpaB.

It catalyses the reaction 4-hydroxyphenylacetate + FADH2 + O2 = 3,4-dihydroxyphenylacetate + FAD + H2O + H(+). It participates in aromatic compound metabolism; 4-hydroxyphenylacetate degradation; pyruvate and succinate semialdehyde from 4-hydroxyphenylacetate: step 1/7. Utilizes FADH(2) supplied by HpaC, to catalyze the hydroxylation of 4-hydroxyphenylacetic acid, leading to the production of 3,4-dihydroxyphenylacetic acid (DHPA). The polypeptide is 4-hydroxyphenylacetate 3-monooxygenase oxygenase component (Thermus thermophilus (strain ATCC 27634 / DSM 579 / HB8)).